Here is a 180-residue protein sequence, read N- to C-terminus: ATP synthase subunit delta (180 aa).

It belongs to the ATPase delta chain family. In terms of assembly, F-type ATPases have 2 components, F(1) - the catalytic core - and F(0) - the membrane proton channel. F(1) has five subunits: alpha(3), beta(3), gamma(1), delta(1), epsilon(1). F(0) has three main subunits: a(1), b(2) and c(10-14). The alpha and beta chains form an alternating ring which encloses part of the gamma chain. F(1) is attached to F(0) by a central stalk formed by the gamma and epsilon chains, while a peripheral stalk is formed by the delta and b chains.

The protein localises to the cell inner membrane. In terms of biological role, f(1)F(0) ATP synthase produces ATP from ADP in the presence of a proton or sodium gradient. F-type ATPases consist of two structural domains, F(1) containing the extramembraneous catalytic core and F(0) containing the membrane proton channel, linked together by a central stalk and a peripheral stalk. During catalysis, ATP synthesis in the catalytic domain of F(1) is coupled via a rotary mechanism of the central stalk subunits to proton translocation. Functionally, this protein is part of the stalk that links CF(0) to CF(1). It either transmits conformational changes from CF(0) to CF(1) or is implicated in proton conduction. In Acidovorax sp. (strain JS42), this protein is ATP synthase subunit delta.